A 680-amino-acid chain; its full sequence is MTASPDYLVVLFGITAGATGAKLGSDEKELILLLWKVVDLANKKVGQLHEVLVRPDQLELTEDCKEETKIDAENLSSAPQLDQALRQFNQSVSNELNIGVGTSFCLCTDGQLHIRQILHPEASKKNVLLPECFYSFFDLRKEFKKCCPGSPDIDKLDVAAMTESLNFEKSDSVSRYGASQVEDMGNIILAMISEPYNHRFSDPERVNYKFESGTCKMELIDDSTVVRARGLPWQSSDQDIARFFKGLNIAKGGAALCLNAQGRRNGEALVRFVSEEHRDLALQRHKHHMGTRYIEVYKATGEDFLKIAGGTSNEVAQFLSKENQVIVRMRGLPFTATAEEVVAFFGQHCPITGGKEGILFVTYPDGRPTGDAFVLFACEEYAQNALRKHKELLGKRYIELFRSTAAEVQQVLNRFSSAPLIPLPTPPIIPVLPQQFVPPTNVRDCIRLRGLPYAATIEDILDFLGEFSTDIRTHGVHMVLNHQGRPSGDAFIQMKSTDRAFMAAQKYHKKTMKDRYVEVFQCSAEEMNFVLMGGTLNRNGLSPPPCKLPCLSPPSYTFPAPTAVIPTEAAIYQPSLLLNPRALQPSTAYYPAGTQLFMNYTAYYPSPPGSPNSLGYFPTAANLSSVPPQPGTVVRMQGLAYNTGVKEILNFFQGYQYATEDGLVHTNDQARTLPKEWVCI.

3 consecutive RRM domains span residues 224-301 (TVVR…KATG), 325-405 (VIVR…RSTA), and 444-524 (DCIR…QCSA). Ser-542 is modified (phosphoserine). Arg-581 carries the post-translational modification Omega-N-methylarginine.

Belongs to the ESRP family. As to expression, epithelial cell-specific. Epithelial-specific expression in diverse tissues and organs with particularly notable levels of expression in skin and gastrointestinal epithelia.

Its subcellular location is the nucleus. Functionally, mRNA splicing factor that regulates the formation of epithelial cell-specific isoforms. Specifically regulates the expression of FGFR2-IIIb, an epithelial cell-specific isoform of FGFR2. Also regulates the splicing of CD44, CTNND1, ENAH, 3 transcripts that undergo changes in splicing during the epithelial-to-mesenchymal transition (EMT). Acts by directly binding specific sequences in mRNAs. Binds the GU-rich sequence motifs in the ISE/ISS-3, a cis-element regulatory region present in the mRNA of FGFR2. Regulates splicing and expression of genes involved in inner ear development, auditory hair cell differentiation, and cell fate specification in the cochlear epithelium. The protein is Epithelial splicing regulatory protein 1 (Esrp1) of Mus musculus (Mouse).